The following is a 489-amino-acid chain: Equilibrative nucleobase transporter 1 (489 aa).

Residues 17–37 (LLECLGFAGVLFGWTSLVFVF) form a helical membrane-spanning segment. Residue asparagine 56 is glycosylated (N-linked (GlcNAc...) asparagine). 4 consecutive transmembrane segments (helical) span residues 72 to 92 (LIFT…GYIF), 102 to 122 (LIAI…SADS), 123 to 143 (AVLL…FLIT), and 158 to 180 (IITM…KLLY). Serine 253 carries the post-translational modification Phosphoserine. Threonine 258 is modified (phosphothreonine). 6 consecutive transmembrane segments (helical) span residues 277–297 (FAWH…FIGT), 318–338 (NAFA…GLLM), 358–380 (AAAL…GFAV), 402–422 (SFLY…EHFG), 426–446 (GLVM…FTLI), and 455–475 (LYVN…PFLV).

It belongs to the SLC43A transporter (TC 2.A.1.44) family.

Its subcellular location is the basolateral cell membrane. It catalyses the reaction adenine(out) = adenine(in). The catalysed reaction is guanine(out) = guanine(in). The enzyme catalyses hypoxanthine(out) = hypoxanthine(in). Sodium-independent purine-selective nucleobase transporter which mediates the equilibrative transport of extracellular purine nucleobases such as adenine, guanine and hypoxanthine. May regulate fatty acid (FA) transport in adipocytes, acting as a positive regulator of FA efflux and as a negative regulator of FA uptake. This Bos taurus (Bovine) protein is Equilibrative nucleobase transporter 1 (SLC43A3).